The following is a 654-amino-acid chain: Tumor necrosis factor alpha-induced protein 2 (654 aa).

Disordered stretches follow at residues 1–38 (MSEA…KKSK) and 50–78 (GKKK…PPPT). The span at 28 to 38 (KKKKEKKKKSK) shows a compositional bias: basic residues.

Belongs to the SEC6 family.

In terms of biological role, may play a role as a mediator of inflammation and angiogenesis. This chain is Tumor necrosis factor alpha-induced protein 2 (TNFAIP2), found in Homo sapiens (Human).